A 213-amino-acid polypeptide reads, in one-letter code: Uridine kinase (213 aa).

14–21 is an ATP binding site; sequence GASASGKS.

This sequence belongs to the uridine kinase family.

The protein localises to the cytoplasm. It carries out the reaction uridine + ATP = UMP + ADP + H(+). The enzyme catalyses cytidine + ATP = CMP + ADP + H(+). Its pathway is pyrimidine metabolism; CTP biosynthesis via salvage pathway; CTP from cytidine: step 1/3. It functions in the pathway pyrimidine metabolism; UMP biosynthesis via salvage pathway; UMP from uridine: step 1/1. This is Uridine kinase from Vibrio atlanticus (strain LGP32) (Vibrio splendidus (strain Mel32)).